The chain runs to 372 residues: Spermidine/putrescine import ATP-binding protein PotA (372 aa).

One can recognise an ABC transporter domain in the interval isoleucine 11 to isoleucine 241. Residue glycine 43–threonine 50 participates in ATP binding.

It belongs to the ABC transporter superfamily. Spermidine/putrescine importer (TC 3.A.1.11.1) family. In terms of assembly, the complex is composed of two ATP-binding proteins (PotA), two transmembrane proteins (PotB and PotC) and a solute-binding protein (PotD).

The protein localises to the cell inner membrane. The catalysed reaction is ATP + H2O + polyamine-[polyamine-binding protein]Side 1 = ADP + phosphate + polyamineSide 2 + [polyamine-binding protein]Side 1.. In terms of biological role, part of the ABC transporter complex PotABCD involved in spermidine/putrescine import. Responsible for energy coupling to the transport system. In Haemophilus influenzae (strain 86-028NP), this protein is Spermidine/putrescine import ATP-binding protein PotA.